Reading from the N-terminus, the 430-residue chain is Adenylosuccinate synthetase (430 aa).

GTP contacts are provided by residues 12 to 18 (GDEGKGK) and 40 to 42 (GHT). Aspartate 13 serves as the catalytic Proton acceptor. Aspartate 13 and glycine 40 together coordinate Mg(2+). Residues 13-16 (DEGK), 38-41 (NAGH), threonine 130, arginine 144, glutamine 224, threonine 239, and arginine 303 contribute to the IMP site. The active-site Proton donor is the histidine 41. Residue 299–305 (VVTGRPR) coordinates substrate. GTP-binding positions include arginine 305, 331–333 (KLD), and 413–415 (STS).

The protein belongs to the adenylosuccinate synthetase family. In terms of assembly, homodimer. Requires Mg(2+) as cofactor.

The protein resides in the cytoplasm. The catalysed reaction is IMP + L-aspartate + GTP = N(6)-(1,2-dicarboxyethyl)-AMP + GDP + phosphate + 2 H(+). Its pathway is purine metabolism; AMP biosynthesis via de novo pathway; AMP from IMP: step 1/2. In terms of biological role, plays an important role in the de novo pathway of purine nucleotide biosynthesis. Catalyzes the first committed step in the biosynthesis of AMP from IMP. The polypeptide is Adenylosuccinate synthetase (Azorhizobium caulinodans (strain ATCC 43989 / DSM 5975 / JCM 20966 / LMG 6465 / NBRC 14845 / NCIMB 13405 / ORS 571)).